A 287-amino-acid polypeptide reads, in one-letter code: MSTIDDLPPLREVIQRHDLSARKSLGQNFLLDLNLTTRIARAAGPLEDSTVIEVGPGPGGLTRALLALGAKRVIAIERDERALGALAEISAHYPGRLDIVCADAMTYDPRPLLGGARAKIVANLPYNIATPLLIGWLETDPWPPWYDCLVLMFQREVAERIVATEDDEAYGRLGVLANWRAQTKMLFDISPAAFVPPPKVTSSVVRLIPRDEPEPCNRRMLEQVTAAAFGQRRKMLRQSLKSLGVDPARLAAAAGVEPTRRAETIPVAGFVAMARELANIRGIKSEC.

Residues Asn-28, Leu-30, Gly-55, Glu-77, Asp-103, and Asn-123 each coordinate S-adenosyl-L-methionine.

This sequence belongs to the class I-like SAM-binding methyltransferase superfamily. rRNA adenine N(6)-methyltransferase family. RsmA subfamily.

It is found in the cytoplasm. The enzyme catalyses adenosine(1518)/adenosine(1519) in 16S rRNA + 4 S-adenosyl-L-methionine = N(6)-dimethyladenosine(1518)/N(6)-dimethyladenosine(1519) in 16S rRNA + 4 S-adenosyl-L-homocysteine + 4 H(+). In terms of biological role, specifically dimethylates two adjacent adenosines (A1518 and A1519) in the loop of a conserved hairpin near the 3'-end of 16S rRNA in the 30S particle. May play a critical role in biogenesis of 30S subunits. The protein is Ribosomal RNA small subunit methyltransferase A of Rhodopseudomonas palustris (strain BisA53).